Here is a 267-residue protein sequence, read N- to C-terminus: MDPQLTEVSQQFERFKAAFARKDYNTCSDLLSQLKVLLTKFTSLPPLFENSPNAAKELTIARDIYEHAVVLSVKTEDQDAFERDFFQLKPYYVDARNRIPQSPQENLILGLNLLRLLVQNRIAEFHTELELLSSATLEDPCIKHAVELEQSFMEGAYNRVLSARQTAPDATYVYFMDLLAKTIRDEIAGCSEKAYDYVSISDARQMLLFSSDQELLTYVTDEHPEWEVKEGFVVFQKAKETAPCKEIPSLQLINQTLSYARELERIV.

M1 bears the N-acetylmethionine mark. One can recognise a PCI domain in the interval 79 to 251; that stretch reads DAFERDFFQL…APCKEIPSLQ (173 aa).

This sequence belongs to the proteasome subunit S14 family. In terms of assembly, component of the 19S regulatory particle (RP/PA700) lid subcomplex of the 26S proteasome. The 26S proteasome is composed of a core protease (CP), known as the 20S proteasome, capped at one or both ends by the 19S regulatory particle (RP/PA700). The RP/PA700 complex is composed of at least 17 different subunits in two subcomplexes, the base and the lid, which form the portions proximal and distal to the 20S proteolytic core, respectively. Interacts with PUB22 and PUB23. Binds to the translation initiation factors TIF3E1. Interacts with UCH1 and UCH2. Post-translationally, ubiquitinated by PUB22 and PUB23. As to expression, ubiquitous with highest expression in flowers.

In terms of biological role, acts as a regulatory subunit of the 26S proteasome which is involved in the ATP-dependent degradation of ubiquitinated proteins. May help to control the degradation of one or more factors that repress cytokinin signaling. Plays an important role for balancing cell expansion with cell proliferation rates during shoot development. In Arabidopsis thaliana (Mouse-ear cress), this protein is 26S proteasome non-ATPase regulatory subunit 8 homolog A.